A 763-amino-acid polypeptide reads, in one-letter code: Protein translocase subunit SecA 2 (763 aa).

ATP contacts are provided by residues Gln-83, 101 to 105 (GEGKT), and Asp-490.

This sequence belongs to the SecA family. As to quaternary structure, monomer and homodimer. Part of the essential Sec protein translocation apparatus which comprises SecA, SecYEG and auxiliary proteins SecDF. Other proteins may also be involved.

It is found in the cell membrane. The protein localises to the cytoplasm. The enzyme catalyses ATP + H2O + cellular proteinSide 1 = ADP + phosphate + cellular proteinSide 2.. Part of the Sec protein translocase complex. Interacts with the SecYEG preprotein conducting channel. Has a central role in coupling the hydrolysis of ATP to the transfer of proteins into and across the cell membrane, serving as an ATP-driven molecular motor driving the stepwise translocation of polypeptide chains across the membrane. This Corynebacterium efficiens (strain DSM 44549 / YS-314 / AJ 12310 / JCM 11189 / NBRC 100395) protein is Protein translocase subunit SecA 2.